A 634-amino-acid chain; its full sequence is UPF0313 protein PG_0934 (634 aa).

The region spanning alanine 302–lysine 582 is the Radical SAM core domain. [4Fe-4S] cluster-binding residues include cysteine 316, cysteine 320, and cysteine 323. Residues aspartate 607–serine 634 are disordered. The span at arginine 625–serine 634 shows a compositional bias: basic residues.

This sequence belongs to the UPF0313 family. [4Fe-4S] cluster serves as cofactor.

The chain is UPF0313 protein PG_0934 from Porphyromonas gingivalis (strain ATCC BAA-308 / W83).